A 370-amino-acid chain; its full sequence is Proline-rich protein 5-like (370 aa).

Ser-28 is subject to Phosphoserine. Disordered regions lie at residues 312-346 (LGEEAGGEDKHLLLPPSFPPPHRQCSSEPSILDSP) and 351-370 (LEDVASGSQEDSELNCASLS).

Belongs to the PROTOR family. Interacts with the mammalian target of rapamycin complex 2 (mTORC2) which contains MTOR, MLST8, PRR5, RICTOR, MAPKAP1 and DEPTOR. Interacts with RFFL. Interacts (via C-terminus) with ZFP36 (via C-terminus); this interaction may accelerate ZFP36-mediated mRNA decay during stress. Interacts with RICTOR. Post-translationally, ubiquitinated. Ubiquitination by RFFL promotes proteasomal degradation of PRR5L thereby modifying the substrate-specific activity of the mTORC2 complex. Ubiquitination by RFFL is stimulated by LPA/lysophosphatidic acid.

Its function is as follows. Associates with the mTORC2 complex that regulates cellular processes including survival and organization of the cytoskeleton. Regulates the activity of the mTORC2 complex in a substrate-specific manner preventing for instance the specific phosphorylation of PKCs and thereby controlling cell migration. Plays a role in the stimulation of ZFP36-mediated mRNA decay of several ZFP36-associated mRNAs, such as TNF-alpha and GM-CSF, in response to stress. Required for ZFP36 localization to cytoplasmic stress granule (SG) and P-body (PB) in response to stress. In Mus musculus (Mouse), this protein is Proline-rich protein 5-like (Prr5l).